We begin with the raw amino-acid sequence, 428 residues long: tRNA modification GTPase MnmE (428 aa).

Residues Arg20, Glu77, and Lys117 each contribute to the (6S)-5-formyl-5,6,7,8-tetrahydrofolate site. Positions Gly213 to Ser351 constitute a TrmE-type G domain. Position 223 (Asn223) interacts with K(+). Residues Asn223–Thr228, Ser242–Thr248, and Asp267–Gly270 each bind GTP. Mg(2+) is bound at residue Ser227. K(+) contacts are provided by Ser242, Ile244, and Thr247. Thr248 is a binding site for Mg(2+). Lys428 lines the (6S)-5-formyl-5,6,7,8-tetrahydrofolate pocket.

This sequence belongs to the TRAFAC class TrmE-Era-EngA-EngB-Septin-like GTPase superfamily. TrmE GTPase family. As to quaternary structure, homodimer. Heterotetramer of two MnmE and two MnmG subunits. K(+) is required as a cofactor.

The protein resides in the cytoplasm. Exhibits a very high intrinsic GTPase hydrolysis rate. Involved in the addition of a carboxymethylaminomethyl (cmnm) group at the wobble position (U34) of certain tRNAs, forming tRNA-cmnm(5)s(2)U34. In Roseobacter denitrificans (strain ATCC 33942 / OCh 114) (Erythrobacter sp. (strain OCh 114)), this protein is tRNA modification GTPase MnmE.